The primary structure comprises 489 residues: Neuropeptide CCHamide-2 receptor (489 aa).

Residues 1 to 74 (MYASLMDVGQ…DRPETYIVTV (74 aa)) are Extracellular-facing. Asparagine 25 and asparagine 50 each carry an N-linked (GlcNAc...) asparagine glycan. Residues 75 to 95 (LYTLIFIVGVLGNGTLVIIFF) traverse the membrane as a helical segment. Topologically, residues 96 to 107 (RHRSMRNIPNTY) are cytoplasmic. Residues 108–128 (ILSLALADLLVILVCVPVATI) form a helical membrane-spanning segment. Residues 129-143 (VYTQESWPFERNMCR) lie on the Extracellular side of the membrane. The cysteines at positions 142 and 225 are disulfide-linked. The helical transmembrane segment at 144 to 164 (ISEFFKDISIGVSVFTLTALS) threads the bilayer. Residues 165–184 (GERYCAIVNPLRKLQTKPLT) lie on the Cytoplasmic side of the membrane. Residues 185-205 (VFTAVMIWILAILLGMPSVLF) form a helical membrane-spanning segment. At 206 to 235 (SDIKSYPVFTATGNMTIEVCSPFRDPEYAK) the chain is on the extracellular side. Asparagine 219 carries an N-linked (GlcNAc...) asparagine glycan. The helical transmembrane segment at 236–256 (FMVAGKALVYYLLPLSIIGAL) threads the bilayer. Topologically, residues 257-293 (YIMMAKRLHMSARNMPGEQQSMQSRTQARARLHVARM) are cytoplasmic. The chain crosses the membrane as a helical span at residues 294 to 314 (VVAFVVVFFICFFPYHVFELW). The Extracellular segment spans residues 315–333 (YHFYPTAEEDFDEFWNVLR). A helical membrane pass occupies residues 334–354 (IVGFCTSFLNSCVNPVALYCV). Residues 355 to 489 (SGVFRQHFNR…NRYESGVMRY (135 aa)) lie on the Cytoplasmic side of the membrane. The tract at residues 438 to 468 (SFHRQDSMPLQHGNAHGGGAGGGSSGLGAGG) is disordered. The segment covering 452-468 (AHGGGAGGGSSGLGAGG) has biased composition (gly residues).

It belongs to the G-protein coupled receptor 1 family. Highly expressed in larval brain. Also highly expressed in adult brain with very low levels in larval and adult gut.

The protein localises to the cell membrane. Receptor for the neuropeptide CCHamide-2. In Drosophila melanogaster (Fruit fly), this protein is Neuropeptide CCHamide-2 receptor.